A 277-amino-acid polypeptide reads, in one-letter code: Protein PTST, chloroplastic (277 aa).

The N-terminal 44 residues, M1–V44, are a transit peptide targeting the chloroplast. The stretch at D95–N152 forms a coiled coil.

In terms of assembly, interacts with GBSS1.

The protein resides in the plastid. Its subcellular location is the chloroplast stroma. Involved in targeting GBSS1 to the starch granule. Was originally thought to be a carbohydrate-binding scaffold protein, but it has been shown that it is mainly found as a soluble protein and that interaction with GBSS1 is a pre-requisite for subsequent starch granule binding. Dissociation from starch as a function of pH, Mg(2+) concentration or redox state is not observed. Interacts primarily with amylopectin and is required for amylose synthesis. The polypeptide is Protein PTST, chloroplastic (Arabidopsis thaliana (Mouse-ear cress)).